Consider the following 599-residue polypeptide: Elongation factor 4 (599 aa).

One can recognise a tr-type G domain in the interval 4-186 (KYIRNFSIIA…AIVEKVPPPK (183 aa)). Residues 16-21 (DHGKST) and 133-136 (NKID) each bind GTP.

Belongs to the TRAFAC class translation factor GTPase superfamily. Classic translation factor GTPase family. LepA subfamily.

Its subcellular location is the cell inner membrane. It carries out the reaction GTP + H2O = GDP + phosphate + H(+). In terms of biological role, required for accurate and efficient protein synthesis under certain stress conditions. May act as a fidelity factor of the translation reaction, by catalyzing a one-codon backward translocation of tRNAs on improperly translocated ribosomes. Back-translocation proceeds from a post-translocation (POST) complex to a pre-translocation (PRE) complex, thus giving elongation factor G a second chance to translocate the tRNAs correctly. Binds to ribosomes in a GTP-dependent manner. The protein is Elongation factor 4 of Bdellovibrio bacteriovorus (strain ATCC 15356 / DSM 50701 / NCIMB 9529 / HD100).